The following is a 518-amino-acid chain: Subtilisin-like serine protease Cla h 9.0101 (518 aa).

Positions 1–16 are cleaved as a signal peptide; the sequence is MRGALAGLSLATLATA. A propeptide spans 17 to 138 (removed in mature form); the sequence is SPVLVNSIHN…ERDQEVHVLG (122 aa). Residues 44–136 enclose the Inhibitor I9 domain; it reads YMIKFKDHVT…LVERDQEVHV (93 aa). One can recognise a Peptidase S8 domain in the interval 148–454; the sequence is PWGLARISHR…GGESNYSAIV (307 aa). Active-site charge relay system residues include Asp184 and His216. An igE-binding region spans residues 244-298; that stretch reads RSNGSGSMSDVVKGVEYAAESHLEQVSITKKGKRKGFKGSTANMSLGGGKSPILD. N-linked (GlcNAc...) asparagine glycosylation is found at Asn246 and Asn286. Ser382 functions as the Charge relay system in the catalytic mechanism. Asn449 is a glycosylation site (N-linked (GlcNAc...) asparagine). A propeptide spans 460-518 (removed in mature form); sequence KATHRPTMLEEIESEAKVASKKVYSEGDELAHKVAELTEKVEDLIAGELKDMFRELKRE.

It belongs to the peptidase S8 family.

Its function is as follows. Serine protease. In Davidiella tassiana (Mycosphaerella tassiana), this protein is Subtilisin-like serine protease Cla h 9.0101.